Consider the following 97-residue polypeptide: Co-chaperonin GroES (97 aa).

It belongs to the GroES chaperonin family. In terms of assembly, heptamer of 7 subunits arranged in a ring. Interacts with the chaperonin GroEL.

Its subcellular location is the cytoplasm. In terms of biological role, together with the chaperonin GroEL, plays an essential role in assisting protein folding. The GroEL-GroES system forms a nano-cage that allows encapsulation of the non-native substrate proteins and provides a physical environment optimized to promote and accelerate protein folding. GroES binds to the apical surface of the GroEL ring, thereby capping the opening of the GroEL channel. This chain is Co-chaperonin GroES, found in Pseudomonas putida (strain ATCC 700007 / DSM 6899 / JCM 31910 / BCRC 17059 / LMG 24140 / F1).